The chain runs to 300 residues: Flaviolin linalyltransferase (300 aa).

This sequence belongs to the aromatic prenyltransferase family. In terms of assembly, monomer.

The catalysed reaction is flaviolin + (2E)-geranyl diphosphate = 3-linalylflaviolin + diphosphate. With respect to regulation, does not require magnesium or any other divalent metal ions for activity. In terms of biological role, involved in the biosynthesis of furanonaphthoquinone I (FNQ I). Catalyzes C- and O-prenylations of different phenolic substrates. With flaviolin as substrate, catalyzes the formation of a carbon-carbon-bond between C-3 (rather than C-1) of geranyl diphosphate and C-3 of flaviolin. With 1,3-dihydroxynaphthalene and 4-hydroxybenzoate as substrates, catalyzes O-prenylations. This chain is Flaviolin linalyltransferase, found in Streptomyces virginiae (Streptomyces cinnamonensis).